We begin with the raw amino-acid sequence, 122 residues long: Large ribosomal subunit protein uL14 (122 aa).

This sequence belongs to the universal ribosomal protein uL14 family. As to quaternary structure, part of the 50S ribosomal subunit. Forms a cluster with proteins L3 and L19. In the 70S ribosome, L14 and L19 interact and together make contacts with the 16S rRNA in bridges B5 and B8.

Binds to 23S rRNA. Forms part of two intersubunit bridges in the 70S ribosome. This is Large ribosomal subunit protein uL14 from Thermoanaerobacter pseudethanolicus (strain ATCC 33223 / 39E) (Clostridium thermohydrosulfuricum).